The primary structure comprises 26 residues: Stage V sporulation protein M (26 aa).

An important for localization region spans residues 3 to 9 (FYTIKLP).

Interacts with SpoIVA. May interact with the ATP-dependent protease FtsH.

The protein localises to the forespore outer membrane. Coordinates cortex and coat assembly during sporulation. Associates with the spore coat protein SpoIVA and with the outer forespore membrane, thereby serving as a membrane anchor that tethers SpoIVA and the entire spore coat to the forespore surface. May also serve as a competitive inhibitor of FtsH activity during sporulation. This Bacillus subtilis (strain 168) protein is Stage V sporulation protein M.